The primary structure comprises 271 residues: Formamidopyrimidine-DNA glycosylase (271 aa).

Residue Pro2 is the Schiff-base intermediate with DNA of the active site. Residue Glu3 is the Proton donor of the active site. Lys58 (proton donor; for beta-elimination activity) is an active-site residue. DNA-binding residues include His91, Arg110, and Arg152. An FPG-type zinc finger spans residues 237–271 (RAYGRGGQPCTVCQTELKEIKLGQRTSVFCPSCQR). Arg261 acts as the Proton donor; for delta-elimination activity in catalysis.

It belongs to the FPG family. As to quaternary structure, monomer. Zn(2+) is required as a cofactor.

It carries out the reaction Hydrolysis of DNA containing ring-opened 7-methylguanine residues, releasing 2,6-diamino-4-hydroxy-5-(N-methyl)formamidopyrimidine.. The enzyme catalyses 2'-deoxyribonucleotide-(2'-deoxyribose 5'-phosphate)-2'-deoxyribonucleotide-DNA = a 3'-end 2'-deoxyribonucleotide-(2,3-dehydro-2,3-deoxyribose 5'-phosphate)-DNA + a 5'-end 5'-phospho-2'-deoxyribonucleoside-DNA + H(+). Functionally, involved in base excision repair of DNA damaged by oxidation or by mutagenic agents. Acts as a DNA glycosylase that recognizes and removes damaged bases. Has a preference for oxidized purines, such as 7,8-dihydro-8-oxoguanine (8-oxoG). Has AP (apurinic/apyrimidinic) lyase activity and introduces nicks in the DNA strand. Cleaves the DNA backbone by beta-delta elimination to generate a single-strand break at the site of the removed base with both 3'- and 5'-phosphates. The polypeptide is Formamidopyrimidine-DNA glycosylase (Hahella chejuensis (strain KCTC 2396)).